We begin with the raw amino-acid sequence, 461 residues long: Na(+)/H(+) antiporter NhaA (461 aa).

The tract at residues 1–23 (MILSTQRLGRFMSPAPTPAPDAK) is disordered. The next 12 helical transmembrane spans lie at 48 to 68 (VGGA…NSPV), 89 to 109 (LSLG…LVGL), 127 to 147 (IVPV…YAAV), 157 to 177 (GWAI…AIIG), 186 to 206 (IFLL…IAFF), 211 to 231 (IQAA…FLAQ), 236 to 256 (FFGA…IVTW), 257 to 277 (ALVH…GFAV), 305 to 325 (ISAG…AVGG), 339 to 359 (IGII…TTWI), 374 to 394 (WIDV…SLLV), and 408 to 428 (HAKV…TVVL).

This sequence belongs to the NhaA Na(+)/H(+) (TC 2.A.33) antiporter family.

It is found in the cell membrane. It catalyses the reaction Na(+)(in) + 2 H(+)(out) = Na(+)(out) + 2 H(+)(in). Functionally, na(+)/H(+) antiporter that extrudes sodium in exchange for external protons. This is Na(+)/H(+) antiporter NhaA from Arthrobacter sp. (strain FB24).